A 132-amino-acid chain; its full sequence is Small ribosomal subunit protein uS11 (132 aa).

The segment at 1–24 is disordered; it reads MAAPKQAARKPRRRDRKSVPVGQA. The span at 7–16 shows a compositional bias: basic residues; that stretch reads AARKPRRRDR.

It belongs to the universal ribosomal protein uS11 family. As to quaternary structure, part of the 30S ribosomal subunit. Interacts with proteins S7 and S18. Binds to IF-3.

Functionally, located on the platform of the 30S subunit, it bridges several disparate RNA helices of the 16S rRNA. Forms part of the Shine-Dalgarno cleft in the 70S ribosome. The polypeptide is Small ribosomal subunit protein uS11 (Bifidobacterium longum (strain DJO10A)).